The following is a 377-amino-acid chain: Nitric oxide reductase FlRd-NAD(+) reductase (377 aa).

The protein belongs to the FAD-dependent oxidoreductase family. The cofactor is FAD.

Its subcellular location is the cytoplasm. It catalyses the reaction 2 reduced [nitric oxide reductase rubredoxin domain] + NAD(+) + H(+) = 2 oxidized [nitric oxide reductase rubredoxin domain] + NADH. The protein operates within nitrogen metabolism; nitric oxide reduction. Its function is as follows. One of at least two accessory proteins for anaerobic nitric oxide (NO) reductase. Reduces the rubredoxin moiety of NO reductase. This is Nitric oxide reductase FlRd-NAD(+) reductase from Salmonella newport (strain SL254).